The sequence spans 122 residues: Serum amyloid A-2 protein (122 aa).

A signal peptide spans 1–19 (MKLLTSLVFCSLLLGVCHG). Over residues 89-108 (RGHEDTMADQEANRHGRSGK) the composition is skewed to basic and acidic residues. Residues 89 to 122 (RGHEDTMADQEANRHGRSGKDPNYYRPPGLPAKY) are disordered.

It belongs to the SAA family. As to quaternary structure, apolipoprotein of the HDL complex. In terms of tissue distribution, expressed by the liver; secreted in plasma.

The protein localises to the secreted. Major acute phase reactant. In Mus musculus (Mouse), this protein is Serum amyloid A-2 protein.